A 406-amino-acid chain; its full sequence is Homocysteine-responsive endoplasmic reticulum-resident ubiquitin-like domain member 2 protein (406 aa).

Positions 10–89 constitute a Ubiquitin-like domain; sequence VTLIIKAPNQ…HMVHLVCTSR (80 aa). Positions 86–154 are disordered; sequence CTSRTPPSSP…TLPQAQTDQA (69 aa). 2 stretches are compositionally biased toward low complexity: residues 87–98 and 106–126; these read TSRTPPSSPKSS and ALAS…PSSG. Residues 127 to 154 show a composition bias toward polar residues; sequence QETLSLAVGSSSEGLRQRTLPQAQTDQA. Residues 302 to 322 traverse the membrane as a helical segment; sequence FIMVMGAMLLVYLHQAGWFPF.

It is found in the membrane. Could be involved in the unfolded protein response (UPR) pathway. The protein is Homocysteine-responsive endoplasmic reticulum-resident ubiquitin-like domain member 2 protein (HERPUD2) of Homo sapiens (Human).